We begin with the raw amino-acid sequence, 436 residues long: 3-ketoacyl-CoA thiolase (436 aa).

Cysteine 99 (acyl-thioester intermediate) is an active-site residue. Residues histidine 392 and cysteine 422 each act as proton acceptor in the active site.

It belongs to the thiolase-like superfamily. Thiolase family. As to quaternary structure, heterotetramer of two alpha chains (FadJ) and two beta chains (FadI).

The protein localises to the cytoplasm. The catalysed reaction is an acyl-CoA + acetyl-CoA = a 3-oxoacyl-CoA + CoA. Its pathway is lipid metabolism; fatty acid beta-oxidation. Functionally, catalyzes the final step of fatty acid oxidation in which acetyl-CoA is released and the CoA ester of a fatty acid two carbons shorter is formed. The protein is 3-ketoacyl-CoA thiolase of Aeromonas salmonicida (strain A449).